We begin with the raw amino-acid sequence, 309 residues long: MEKKNETLWTEFVLTGLTCLPQWKPLLFLVFLVIYFMTIVGNLGLITLIWNDPHLHIPMYLFLSNLAFVDTWLSSTVTPRMLFNLLDKGKVISVAECKTQFFSFAISVTTECFLLAAMAYDRYAAICNPLLYPVIMTNRLCVRLLALSFIGGFLHAVIHESFLSRLTFCNSNIIYHFYCDVIPLLKISCTDPSLNYLIIFIFSGSIQVFTIMTVLISYTFVLFTILKKKSDKGIRKAFSTCGAHLLSVSLYYGPLLFMYVHPASSEVDDQDMILSLFYTVIIPVLNPIIYSLRNKQVIDSLKKMLKMMV.

The Extracellular segment spans residues 1-28; that stretch reads MEKKNETLWTEFVLTGLTCLPQWKPLLF. Residue Asn5 is glycosylated (N-linked (GlcNAc...) asparagine). The helical transmembrane segment at 29 to 49 threads the bilayer; sequence LVFLVIYFMTIVGNLGLITLI. The Cytoplasmic segment spans residues 50-56; sequence WNDPHLH. The chain crosses the membrane as a helical span at residues 57 to 77; it reads IPMYLFLSNLAFVDTWLSSTV. Residues 78–93 are Extracellular-facing; the sequence is TPRMLFNLLDKGKVIS. A helical membrane pass occupies residues 94-114; sequence VAECKTQFFSFAISVTTECFL. Residues Cys97 and Cys189 are joined by a disulfide bond. Residues 115-144 are Cytoplasmic-facing; that stretch reads LAAMAYDRYAAICNPLLYPVIMTNRLCVRL. A helical transmembrane segment spans residues 145 to 165; that stretch reads LALSFIGGFLHAVIHESFLSR. The Extracellular portion of the chain corresponds to 166-198; the sequence is LTFCNSNIIYHFYCDVIPLLKISCTDPSLNYLI. A helical membrane pass occupies residues 199-219; that stretch reads IFIFSGSIQVFTIMTVLISYT. Topologically, residues 220–239 are cytoplasmic; that stretch reads FVLFTILKKKSDKGIRKAFS. Residues 240–260 traverse the membrane as a helical segment; sequence TCGAHLLSVSLYYGPLLFMYV. Residues 261-271 lie on the Extracellular side of the membrane; it reads HPASSEVDDQD. Residues 272–292 form a helical membrane-spanning segment; sequence MILSLFYTVIIPVLNPIIYSL. Over 293 to 309 the chain is Cytoplasmic; it reads RNKQVIDSLKKMLKMMV.

It belongs to the G-protein coupled receptor 1 family.

It localises to the cell membrane. Functionally, potential odorant receptor. The polypeptide is Olfactory receptor 5H17 (Mus musculus (Mouse)).